Reading from the N-terminus, the 674-residue chain is CRS2-associated factor 1, chloroplastic (674 aa).

The N-terminal 54 residues, 1–54, are a transit peptide targeting the chloroplast; it reads MATARLPSRSFLSPAQQSYPRLPASVRLCLSHHEQPPTGPKRHRRAATSHPAFS. Residues 31–61 are disordered; it reads SHHEQPPTGPKRHRRAATSHPAFSAAARGRA. Positions 48-57 are enriched in low complexity; it reads TSHPAFSAAA. 2 consecutive CRM domains span residues 183 to 279 and 301 to 397; these read EPLT…TRPC and GGLT…LPPL. Positions 554–576 are CRS2 binding; that stretch reads GLLCLLEQAIHSGRALVLSEDEL.

As to quaternary structure, interacts with CRS2 and RNA. Part of large ribonucleo-protein complexes that include group IIB introns, CRS2 and CAF1.

It is found in the plastid. It localises to the chloroplast stroma. Required for the splicing of group IIB introns in chloroplasts. Forms splicing particles with CRS2. Interacts with RNA and confers intron specificity of the splicing particles. The sequence is that of CRS2-associated factor 1, chloroplastic (CAF1) from Zea mays (Maize).